Reading from the N-terminus, the 159-residue chain is MPSFDVVSELDKHEVTNAVDNAIKELDRRYDLRGKGSFEFKDKTLTLTAEADFMLEQMIEILKLALIKRKVDIQCLEYKDSYASGKVVKQEVILREGIDKDLAKKIVALIKDSKLKVQAAIQGEQVRITGKKRDDLQEAIALLRGQELGMPLQFNNFRD.

Belongs to the YajQ family.

Functionally, nucleotide-binding protein. This Azotobacter vinelandii (strain DJ / ATCC BAA-1303) protein is Nucleotide-binding protein Avin_13410.